A 485-amino-acid chain; its full sequence is Aspartyl/glutamyl-tRNA(Asn/Gln) amidotransferase subunit B (485 aa).

The protein belongs to the GatB/GatE family. GatB subfamily. In terms of assembly, heterotrimer of A, B and C subunits.

It catalyses the reaction L-glutamyl-tRNA(Gln) + L-glutamine + ATP + H2O = L-glutaminyl-tRNA(Gln) + L-glutamate + ADP + phosphate + H(+). The catalysed reaction is L-aspartyl-tRNA(Asn) + L-glutamine + ATP + H2O = L-asparaginyl-tRNA(Asn) + L-glutamate + ADP + phosphate + 2 H(+). Allows the formation of correctly charged Asn-tRNA(Asn) or Gln-tRNA(Gln) through the transamidation of misacylated Asp-tRNA(Asn) or Glu-tRNA(Gln) in organisms which lack either or both of asparaginyl-tRNA or glutaminyl-tRNA synthetases. The reaction takes place in the presence of glutamine and ATP through an activated phospho-Asp-tRNA(Asn) or phospho-Glu-tRNA(Gln). This chain is Aspartyl/glutamyl-tRNA(Asn/Gln) amidotransferase subunit B, found in Anaplasma marginale (strain Florida).